The sequence spans 197 residues: Autophagy-related protein 33 (197 aa).

3 helical membrane-spanning segments follow: residues 10-30, 52-72, and 78-98; these read GIAV…SLIT, AATA…FGAP, and PYLL…GCAS. Residues serine 127 and serine 129 each carry the phosphoserine modification. Over residues 135–148 the composition is skewed to basic and acidic residues; sequence EDNHASENTPRDGK. The segment at 135-154 is disordered; sequence EDNHASENTPRDGKPAATTV. A helical membrane pass occupies residues 172–192; sequence LIAATAIAIVGFVQAVIGVYG.

This sequence belongs to the ATG33 family.

Its subcellular location is the mitochondrion membrane. Functionally, involved in the selective degradation of mitochondria via autophagy during starvation and at post-log phase. This chain is Autophagy-related protein 33 (ATG33), found in Saccharomyces cerevisiae (strain ATCC 204508 / S288c) (Baker's yeast).